A 235-amino-acid polypeptide reads, in one-letter code: Octanoyltransferase LIP2, mitochondrial (235 aa).

Residues 1-32 constitute a mitochondrion transit peptide; that stretch reads MRSPRTLEVWKLGTVNYLKSLKLQEKLVSERK. The BPL/LPL catalytic domain maps to 34-218; it reads HQIPDTLLSL…CLAKAFSYDD (185 aa). Residues 79–86, 147–149, and 160–162 each bind substrate; these read RGGDITFH, AIG, and GLA. Cys178 acts as the Acyl-thioester intermediate in catalysis.

This sequence belongs to the LipB family. As to expression, expressed in leaves. Expressed in roots, rosette leaves, cauline leaves, stems and siliques.

The protein localises to the mitochondrion. It catalyses the reaction octanoyl-[ACP] + L-lysyl-[protein] = N(6)-octanoyl-L-lysyl-[protein] + holo-[ACP] + H(+). Its pathway is protein modification; protein lipoylation via endogenous pathway; protein N(6)-(lipoyl)lysine from octanoyl-[acyl-carrier-protein]: step 1/2. Functionally, catalyzes the transfer of endogenously produced octanoic acid from octanoyl-acyl-carrier-protein onto the lipoyl domains of lipoate-dependent enzymes. Lipoyl-ACP can also act as a substrate although octanoyl-ACP is likely to be the physiological substrate. Together with LIP1 is essential for mitochondrial protein lipoylation during seed development. Required for the lipoylation of mitochondrial 2-oxoglutarate dehydrogenase component E2 proteins in leaves and roots. The protein is Octanoyltransferase LIP2, mitochondrial of Arabidopsis thaliana (Mouse-ear cress).